A 362-amino-acid polypeptide reads, in one-letter code: Neutral protease 2 homolog MEP2 (362 aa).

Positions 1–19 (MLFPSIVAALAALANPVLS) are cleaved as a signal peptide. A propeptide spanning residues 20–177 (LTIPQATGSE…SKAINPISAR (158 aa)) is cleaved from the precursor. 2 disulfides stabilise this stretch: cysteine 184-cysteine 255 and cysteine 262-cysteine 280. Zn(2+) is bound at residue histidine 304. Glutamate 305 is a catalytic residue. Zn(2+)-binding residues include histidine 308 and aspartate 319.

The protein belongs to the peptidase M35 family. The cofactor is Zn(2+).

Its subcellular location is the secreted. The catalysed reaction is Preferential cleavage of bonds with hydrophobic residues in P1'. Also 3-Asn-|-Gln-4 and 8-Gly-|-Ser-9 bonds in insulin B chain.. In terms of biological role, secreted metalloproteinase that allows assimilation of proteinaceous substrates. Shows high activities on basic nuclear substrates such as histone and protamine. May be involved in virulence. The sequence is that of Neutral protease 2 homolog MEP2 (MEP2) from Coccidioides posadasii (strain C735) (Valley fever fungus).